Reading from the N-terminus, the 175-residue chain is Alpha-crystallin B chain (175 aa).

Residue Met-1 is modified to N-acetylmethionine. Ser-19 is modified (phosphoserine). Residue Ser-41 is glycosylated (O-linked (GlcNAc) serine). Ser-45 and Ser-59 each carry phosphoserine. In terms of domain architecture, sHSP spans 56–164 (RAPSWIDTGL…PERTIPITRE (109 aa)). Residue His-83 participates in Zn(2+) binding. Residue Lys-92 is modified to N6-acetyllysine. Zn(2+) contacts are provided by His-104, Glu-106, His-111, and His-119. The segment at 142–175 (VLTVNGPRKQASGPERTIPITREEKPAVTAAPKK) is disordered. Lys-166 bears the N6-acetyllysine mark. The O-linked (GlcNAc) threonine glycan is linked to Thr-170.

This sequence belongs to the small heat shock protein (HSP20) family. In terms of assembly, heteromer composed of three CRYAA and one CRYAB subunits. Aggregates with homologous proteins, including the small heat shock protein HSPB1, to form large heteromeric complexes. Inter-subunit bridging via zinc ions enhances stability, which is crucial as there is no protein turn over in the lens. Interacts with HSPBAP1 and TTN/titin. Interacts with TMEM109; in the cellular response to DNA damage. Interacts with DES; binds rapidly during early stages of DES filament assembly and a reduced binding seen in the later stages. Interacts with ATP6V1A and with MTOR, forming a ternary complex. As to expression, lens as well as other tissues.

It localises to the cytoplasm. It is found in the nucleus. The protein resides in the secreted. The protein localises to the lysosome. Its function is as follows. May contribute to the transparency and refractive index of the lens. Has chaperone-like activity, preventing aggregation of various proteins under a wide range of stress conditions. In lens epithelial cells, stabilizes the ATP6V1A protein, preventing its degradation by the proteasome. The polypeptide is Alpha-crystallin B chain (CRYAB) (Spalax judaei (Judean Mountains blind mole rat)).